The sequence spans 66 residues: ATP synthase subunit c (66 aa).

Transmembrane regions (helical) follow at residues 3–23 (LTFLGLCIACMGVSVGEGLLM) and 45–65 (FLGVAFIEGTFFVTLVFSFII).

This sequence belongs to the ATPase C chain family. In terms of assembly, F-type ATPases have 2 components, F(1) - the catalytic core - and F(0) - the membrane proton channel. F(1) has five subunits: alpha(3), beta(3), gamma(1), delta(1), epsilon(1). F(0) has three main subunits: a(1), b(2) and c(10-14). The alpha and beta chains form an alternating ring which encloses part of the gamma chain. F(1) is attached to F(0) by a central stalk formed by the gamma and epsilon chains, while a peripheral stalk is formed by the delta and b chains.

The protein resides in the cell membrane. F(1)F(0) ATP synthase produces ATP from ADP in the presence of a proton or sodium gradient. F-type ATPases consist of two structural domains, F(1) containing the extramembraneous catalytic core and F(0) containing the membrane proton channel, linked together by a central stalk and a peripheral stalk. During catalysis, ATP synthesis in the catalytic domain of F(1) is coupled via a rotary mechanism of the central stalk subunits to proton translocation. In terms of biological role, key component of the F(0) channel; it plays a direct role in translocation across the membrane. A homomeric c-ring of between 10-14 subunits forms the central stalk rotor element with the F(1) delta and epsilon subunits. The sequence is that of ATP synthase subunit c from Streptococcus pneumoniae serotype 19F (strain G54).